Consider the following 1052-residue polypeptide: RIMS-binding protein 2 (1052 aa).

The interval 115–164 (GEYIRPLPQPGDRPEPLSAKPTFLSRSGSARCRSESDMENERNSNTSKQR) is disordered. Basic and acidic residues predominate over residues 146–156 (CRSESDMENER). The SH3 1 domain occupies 167–234 (GKVHLCVARY…PSNFVDFVQD (68 aa)). Fibronectin type-III domains follow at residues 297-390 (VPYP…GKDV), 393-475 (APSH…KKEA), and 489-590 (PPQD…VPPT). Disordered stretches follow at residues 584–615 (ELLV…DEHL), 629–666 (RAPG…PVST), 697–716 (SAGQ…PDFK), 767–787 (EMQL…NALK), and 805–829 (FPRG…YGRD). Residues 585-598 (LLVPPTPHPRPAPQ) are compositionally biased toward pro residues. Residues 645 to 654 (PGRRSPSPSR) are compositionally biased toward low complexity. Phosphoserine is present on residues S704 and S712. Residues S832 and S839 each carry the phosphoserine modification. T841 carries the post-translational modification Phosphothreonine. 2 consecutive SH3 domains span residues 848 to 916 (LPAR…EIQA) and 952 to 1019 (VSTR…EVPD). A disordered region spans residues 1029–1052 (PSHYSQDTPMRSKAKRKKSVHFTP). The span at 1040–1052 (SKAKRKKSVHFTP) shows a compositional bias: basic residues.

It belongs to the RIMBP family. As to quaternary structure, interacts with RIMS1, RIMS2, CACNA1D and CACNA1B, and potentially with other Ca(2+) channel alpha-1 isoforms.

The protein localises to the cell membrane. It localises to the synapse. In terms of biological role, plays a role in the synaptic transmission as bifunctional linker that interacts simultaneously with RIMS1, RIMS2, CACNA1D and CACNA1B. In Homo sapiens (Human), this protein is RIMS-binding protein 2 (RIMBP2).